Consider the following 177-residue polypeptide: Large ribosomal subunit protein uL6 (177 aa).

It belongs to the universal ribosomal protein uL6 family. In terms of assembly, part of the 50S ribosomal subunit.

This protein binds to the 23S rRNA, and is important in its secondary structure. It is located near the subunit interface in the base of the L7/L12 stalk, and near the tRNA binding site of the peptidyltransferase center. The sequence is that of Large ribosomal subunit protein uL6 from Aliivibrio salmonicida (strain LFI1238) (Vibrio salmonicida (strain LFI1238)).